A 224-amino-acid polypeptide reads, in one-letter code: Biosynthetic peptidoglycan transglycosylase (224 aa).

A helical transmembrane segment spans residues 12–32; it reads ILVVLAILPVFLLLVYSLPFV.

This sequence belongs to the glycosyltransferase 51 family.

The protein resides in the cell inner membrane. It catalyses the reaction [GlcNAc-(1-&gt;4)-Mur2Ac(oyl-L-Ala-gamma-D-Glu-L-Lys-D-Ala-D-Ala)](n)-di-trans,octa-cis-undecaprenyl diphosphate + beta-D-GlcNAc-(1-&gt;4)-Mur2Ac(oyl-L-Ala-gamma-D-Glu-L-Lys-D-Ala-D-Ala)-di-trans,octa-cis-undecaprenyl diphosphate = [GlcNAc-(1-&gt;4)-Mur2Ac(oyl-L-Ala-gamma-D-Glu-L-Lys-D-Ala-D-Ala)](n+1)-di-trans,octa-cis-undecaprenyl diphosphate + di-trans,octa-cis-undecaprenyl diphosphate + H(+). The protein operates within cell wall biogenesis; peptidoglycan biosynthesis. Its function is as follows. Peptidoglycan polymerase that catalyzes glycan chain elongation from lipid-linked precursors. This chain is Biosynthetic peptidoglycan transglycosylase, found in Brucella melitensis biotype 1 (strain ATCC 23456 / CCUG 17765 / NCTC 10094 / 16M).